We begin with the raw amino-acid sequence, 131 residues long: Glycine cleavage system H protein (131 aa).

The region spanning 24 to 106 (RVTVGISDHA…YGDGWMYVVE (83 aa)) is the Lipoyl-binding domain. Residue Lys65 is modified to N6-lipoyllysine.

It belongs to the GcvH family. In terms of assembly, the glycine cleavage system is composed of four proteins: P, T, L and H. Requires (R)-lipoate as cofactor.

Its function is as follows. The glycine cleavage system catalyzes the degradation of glycine. The H protein shuttles the methylamine group of glycine from the P protein to the T protein. The sequence is that of Glycine cleavage system H protein from Stenotrophomonas maltophilia (strain R551-3).